Here is a 141-residue protein sequence, read N- to C-terminus: Large ribosomal subunit protein uL11 (141 aa).

This sequence belongs to the universal ribosomal protein uL11 family. In terms of assembly, part of the ribosomal stalk of the 50S ribosomal subunit. Interacts with L10 and the large rRNA to form the base of the stalk. L10 forms an elongated spine to which L12 dimers bind in a sequential fashion forming a multimeric L10(L12)X complex. In terms of processing, one or more lysine residues are methylated.

Its function is as follows. Forms part of the ribosomal stalk which helps the ribosome interact with GTP-bound translation factors. The polypeptide is Large ribosomal subunit protein uL11 (Nautilia profundicola (strain ATCC BAA-1463 / DSM 18972 / AmH)).